We begin with the raw amino-acid sequence, 479 residues long: Poly(A) polymerase catalytic subunit (479 aa).

Active-site residues include aspartate 202 and aspartate 204. Ca(2+) contacts are provided by aspartate 202, aspartate 204, and aspartate 253.

Belongs to the poxviridae poly(A) polymerase catalytic subunit family. In terms of assembly, heterodimer of a large (catalytic) subunit and a small (regulatory) subunit.

It carries out the reaction RNA(n) + ATP = RNA(n)-3'-adenine ribonucleotide + diphosphate. Functionally, polymerase that creates the 3'-poly(A) tail of mRNA's. The protein is Poly(A) polymerase catalytic subunit (OPG063) of Homo sapiens (Human).